The primary structure comprises 278 residues: Tryptophan synthase alpha chain (278 aa).

Catalysis depends on proton acceptor residues glutamate 50 and aspartate 61.

It belongs to the TrpA family. Tetramer of two alpha and two beta chains.

It carries out the reaction (1S,2R)-1-C-(indol-3-yl)glycerol 3-phosphate + L-serine = D-glyceraldehyde 3-phosphate + L-tryptophan + H2O. It participates in amino-acid biosynthesis; L-tryptophan biosynthesis; L-tryptophan from chorismate: step 5/5. In terms of biological role, the alpha subunit is responsible for the aldol cleavage of indoleglycerol phosphate to indole and glyceraldehyde 3-phosphate. This is Tryptophan synthase alpha chain from Rhodopseudomonas palustris (strain TIE-1).